The chain runs to 186 residues: Zinc finger AN1 domain-containing stress-associated protein 12 (186 aa).

2 AN1-type zinc fingers span residues 10-58 and 97-147; these read PDLG…HGSR and KKKK…INTA. Cys-16, Cys-21, Cys-31, Cys-34, Cys-39, His-42, His-48, Cys-50, Cys-103, Cys-108, Cys-120, Cys-123, Cys-128, His-131, His-137, and Cys-139 together coordinate Zn(2+). The tract at residues 167-186 is disordered; that stretch reads KGCGRGSSVSSKSSPSVRSF. Residues 172–186 are compositionally biased toward low complexity; the sequence is GSSVSSKSSPSVRSF.

Its function is as follows. May be involved in environmental stress response. In Arabidopsis thaliana (Mouse-ear cress), this protein is Zinc finger AN1 domain-containing stress-associated protein 12 (SAP12).